The sequence spans 288 residues: tRNA (guanine-N(1)-)-methyltransferase (288 aa).

The interval alanine 82–alanine 105 is disordered. Positions serine 89–alanine 105 are enriched in low complexity. S-adenosyl-L-methionine-binding positions include glycine 137 and isoleucine 162 to leucine 167.

This sequence belongs to the RNA methyltransferase TrmD family. In terms of assembly, homodimer.

It localises to the cytoplasm. The enzyme catalyses guanosine(37) in tRNA + S-adenosyl-L-methionine = N(1)-methylguanosine(37) in tRNA + S-adenosyl-L-homocysteine + H(+). In terms of biological role, specifically methylates guanosine-37 in various tRNAs. This Bifidobacterium longum (strain DJO10A) protein is tRNA (guanine-N(1)-)-methyltransferase.